A 296-amino-acid polypeptide reads, in one-letter code: MNPKSPLFLRLSDRLDVYLRLMRADKPIGTLLLLWPTYWALWLASDGIPDLAVLAAFTIGTFLMRSAGCVINDFADRDFDGAVERTKNRPFAQGRVKKKEALLLTAFLCLLAALCLIPLNHLTWLMSLPALFLALTYPFTKRFFPIPQLYLGLAFSFGIPMAFAAVGNSVPVEAWILFTANVLWTLAYDTVYAMADKEDDLKIGIKTSAVTFGRYDIAAVMLCHGGFTLLMAVLGAVIGAAWAYWTAIPIVLLLQYRQYAAIKSRVRQICFETFLANNRIGWVWFTAIFAHTFFAK.

A run of 8 helical transmembrane segments spans residues 28 to 48, 51 to 71, 102 to 122, 143 to 163, 174 to 194, 212 to 232, 233 to 253, and 274 to 294; these read IGTLLLLWPTYWALWLASDGI, LAVLAAFTIGTFLMRSAGCVI, LLLTAFLCLLAALCLIPLNHL, FFPIPQLYLGLAFSFGIPMAF, AWILFTANVLWTLAYDTVYAM, FGRYDIAAVMLCHGGFTLLMA, VLGAVIGAAWAYWTAIPIVLL, and FLANNRIGWVWFTAIFAHTFF.

This sequence belongs to the UbiA prenyltransferase family. Mg(2+) serves as cofactor.

Its subcellular location is the cell inner membrane. It carries out the reaction all-trans-octaprenyl diphosphate + 4-hydroxybenzoate = 4-hydroxy-3-(all-trans-octaprenyl)benzoate + diphosphate. It functions in the pathway cofactor biosynthesis; ubiquinone biosynthesis. Functionally, catalyzes the prenylation of para-hydroxybenzoate (PHB) with an all-trans polyprenyl group. Mediates the second step in the final reaction sequence of ubiquinone-8 (UQ-8) biosynthesis, which is the condensation of the polyisoprenoid side chain with PHB, generating the first membrane-bound Q intermediate 3-octaprenyl-4-hydroxybenzoate. The chain is 4-hydroxybenzoate octaprenyltransferase from Neisseria meningitidis serogroup C (strain 053442).